Consider the following 287-residue polypeptide: MSLETHRKEIYIHYFVKDVNAGDRYNKFMAEKLVDAKVVCVTCETINYNPHFQFVGSIASSSNKNTVILGTGLLLQSRYIKAFKECHIVRGKYTLIYLKAFMKDVSSITLGDPGILLECFIDKENRPEPIYEYGIIPHYVDKARTKELMTSEWDDKVLYIDIQTDDLVGLAKQMLSCKKMVSSSLHGIIFAHSLGIPVTWVRFDGTKLTPDDIKFYDYLSVFGIERDQYKKYCTLIKNNLSLNDFANFPTIDIDATLIANKKQELLSKTISVLRKHNFRIRDEFSNY.

This is an uncharacterized protein from Acanthamoeba polyphaga mimivirus (APMV).